Reading from the N-terminus, the 168-residue chain is Ribosome maturation factor RimM (168 aa).

The PRC barrel domain occupies 96 to 168; sequence KDEYYWGDLV…RIRVAWQKDW (73 aa).

This sequence belongs to the RimM family. As to quaternary structure, binds ribosomal protein uS19.

The protein localises to the cytoplasm. An accessory protein needed during the final step in the assembly of 30S ribosomal subunit, possibly for assembly of the head region. Essential for efficient processing of 16S rRNA. May be needed both before and after RbfA during the maturation of 16S rRNA. It has affinity for free ribosomal 30S subunits but not for 70S ribosomes. This is Ribosome maturation factor RimM from Azoarcus sp. (strain BH72).